The primary structure comprises 355 residues: uncharacterized protein (355 aa).

Disordered stretches follow at residues 1–121, 226–253, and 336–355; these read MPID…MELR, RLMN…KSSM, and NLHR…RKRT. A compositionally biased stretch (acidic residues) spans 24-37; the sequence is LESESSSESDYEEV. A compositionally biased stretch (polar residues) spans 65 to 87; the sequence is ETKTSSNFQNINPVQTIDNSASE. The segment covering 91-105 has biased composition (low complexity); the sequence is DASSAEGGSNSAASS. A compositionally biased stretch (acidic residues) spans 106 to 117; sequence SEEEDSSDSEYE. Basic and acidic residues predominate over residues 226–245; it reads RLMNSEEREAQDLKDAEASR.

This is an uncharacterized protein from Schizosaccharomyces pombe (strain 972 / ATCC 24843) (Fission yeast).